The primary structure comprises 199 residues: ATP synthase subunit a (199 aa).

The next 5 membrane-spanning stretches (helical) occupy residues 2–22 (NQVY…LFYF), 53–73 (VISV…YFTY), 80–100 (MVEF…LTFI), 141–161 (LTVN…GLEL), and 169–189 (WLSI…SYIF).

It belongs to the ATPase A chain family. As to quaternary structure, F-type ATPases have 2 components, CF(1) - the catalytic core - and CF(0) - the membrane proton channel. CF(1) has five subunits: alpha(3), beta(3), gamma(1), delta(1), epsilon(1). CF(0) has three main subunits: a, b and c.

Its subcellular location is the mitochondrion inner membrane. Functionally, mitochondrial membrane ATP synthase (F(1)F(0) ATP synthase or Complex V) produces ATP from ADP in the presence of a proton gradient across the membrane which is generated by electron transport complexes of the respiratory chain. F-type ATPases consist of two structural domains, F(1) - containing the extramembraneous catalytic core and F(0) - containing the membrane proton channel, linked together by a central stalk and a peripheral stalk. During catalysis, ATP synthesis in the catalytic domain of F(1) is coupled via a rotary mechanism of the central stalk subunits to proton translocation. Key component of the proton channel; it may play a direct role in the translocation of protons across the membrane. This is ATP synthase subunit a (atp6) from Caenorhabditis briggsae.